Reading from the N-terminus, the 436-residue chain is Trigger factor (436 aa).

Residues Gly-163 to Pro-248 form the PPIase FKBP-type domain.

This sequence belongs to the FKBP-type PPIase family. Tig subfamily.

The protein localises to the cytoplasm. The catalysed reaction is [protein]-peptidylproline (omega=180) = [protein]-peptidylproline (omega=0). Its function is as follows. Involved in protein export. Acts as a chaperone by maintaining the newly synthesized protein in an open conformation. Functions as a peptidyl-prolyl cis-trans isomerase. The sequence is that of Trigger factor from Polaromonas naphthalenivorans (strain CJ2).